A 457-amino-acid polypeptide reads, in one-letter code: Carboxypeptidase N catalytic chain (457 aa).

The signal sequence occupies residues 1–23 (MPDLPSAFLPLLLLSKFVTPVTF). Residues 24–338 (RHHRYDDLVR…EALIQFLEQV (315 aa)) enclose the Peptidase M14 domain. C42 and C104 are joined by a disulfide. Residues H86, E89, and H216 each coordinate Zn(2+). A disulfide bond links C271 and C311. The active-site Proton donor/acceptor is E308. Residues T400, T402, and T409 are each glycosylated (O-linked (GalNAc...) threonine). The interval 418–457 (STTQVHPVQKAPGRGQGSRAKQPRTSRKKDQAAKRHRGPA) is disordered.

This sequence belongs to the peptidase M14 family. In terms of assembly, tetramer of two catalytic chains and two glycosylated inactive chains. The cofactor is Zn(2+). As to expression, plasma. Expressed in liver.

Its subcellular location is the secreted. The protein resides in the extracellular space. The enzyme catalyses Release of a C-terminal basic amino acid, preferentially lysine.. Protects the body from potent vasoactive and inflammatory peptides containing C-terminal Arg or Lys (such as kinins or anaphylatoxins) which are released into the circulation. This Rattus norvegicus (Rat) protein is Carboxypeptidase N catalytic chain (Cpn1).